A 411-amino-acid polypeptide reads, in one-letter code: Efflux pump periplasmic linker BepF (411 aa).

Residues 118–196 adopt a coiled-coil conformation; it reads FVLQKDALQA…SLEQAQINLG (79 aa).

Belongs to the membrane fusion protein (MFP) (TC 8.A.1) family. As to quaternary structure, probably part of a tripartite efflux pump, which is composed of an outer membrane efflux protein, an inner membrane protein and a protein that expands the periplasmic space. Could form a tripartite pump with BepC and BepG.

Its subcellular location is the periplasm. Functionally, may contribute to resistance to some drugs, such as deoxycholate, sodium dodecyl sulfate and nalidixic acid, in the absence of BepD and BepE. This chain is Efflux pump periplasmic linker BepF (bepF), found in Brucella suis biovar 1 (strain 1330).